Here is a 205-residue protein sequence, read N- to C-terminus: Ribonuclease HII (205 aa).

Residues 1 to 203 form the RNase H type-2 domain; that stretch reads MKAGIDEAGK…VSNLRQKTLD (203 aa). Positions 6 and 7 each coordinate a divalent metal cation. R46 contacts substrate. D101 provides a ligand contact to a divalent metal cation. Substrate is bound by residues K143, R146, and Y164.

This sequence belongs to the RNase HII family. Mn(2+) is required as a cofactor. The cofactor is Mg(2+).

The protein resides in the cytoplasm. It catalyses the reaction Endonucleolytic cleavage to 5'-phosphomonoester.. In terms of biological role, endonuclease that specifically degrades the RNA of RNA-DNA hybrids. This chain is Ribonuclease HII (rnhB), found in Archaeoglobus fulgidus (strain ATCC 49558 / DSM 4304 / JCM 9628 / NBRC 100126 / VC-16).